The chain runs to 200 residues: Putative 3-methyladenine DNA glycosylase (200 aa).

This sequence belongs to the DNA glycosylase MPG family.

The chain is Putative 3-methyladenine DNA glycosylase from Methanocella arvoryzae (strain DSM 22066 / NBRC 105507 / MRE50).